Reading from the N-terminus, the 220-residue chain is Deoxyribose-phosphate aldolase (220 aa).

The active-site Proton donor/acceptor is the aspartate 92. The Schiff-base intermediate with acetaldehyde role is filled by lysine 157. Lysine 186 acts as the Proton donor/acceptor in catalysis.

The protein belongs to the DeoC/FbaB aldolase family. DeoC type 1 subfamily.

The protein localises to the cytoplasm. It catalyses the reaction 2-deoxy-D-ribose 5-phosphate = D-glyceraldehyde 3-phosphate + acetaldehyde. It participates in carbohydrate degradation; 2-deoxy-D-ribose 1-phosphate degradation; D-glyceraldehyde 3-phosphate and acetaldehyde from 2-deoxy-alpha-D-ribose 1-phosphate: step 2/2. Catalyzes a reversible aldol reaction between acetaldehyde and D-glyceraldehyde 3-phosphate to generate 2-deoxy-D-ribose 5-phosphate. In Caldicellulosiruptor saccharolyticus (strain ATCC 43494 / DSM 8903 / Tp8T 6331), this protein is Deoxyribose-phosphate aldolase.